The sequence spans 129 residues: MAKDYSRTQRIGDQMQRELSFLIQREIKDPRLGMITVTAVEVARDLSHAKVFITVMGKEDSADEIERNLEILHEAAGFLRMQLGKSMKLRSVPQLHFSYDASVRRGVELSALIERAVAEDRLHTGKGEE.

The protein belongs to the RbfA family. As to quaternary structure, monomer. Binds 30S ribosomal subunits, but not 50S ribosomal subunits or 70S ribosomes.

The protein resides in the cytoplasm. Functionally, one of several proteins that assist in the late maturation steps of the functional core of the 30S ribosomal subunit. Associates with free 30S ribosomal subunits (but not with 30S subunits that are part of 70S ribosomes or polysomes). Required for efficient processing of 16S rRNA. May interact with the 5'-terminal helix region of 16S rRNA. The protein is Ribosome-binding factor A of Azotobacter vinelandii (strain DJ / ATCC BAA-1303).